The following is an 86-amino-acid chain: Small ribosomal subunit protein bS16 (86 aa).

This sequence belongs to the bacterial ribosomal protein bS16 family.

The polypeptide is Small ribosomal subunit protein bS16 (Legionella pneumophila (strain Paris)).